Here is a 116-residue protein sequence, read N- to C-terminus: uncharacterized protein (116 aa).

Residues 5 to 23 form a helical membrane-spanning segment; the sequence is LLAVETWYMLILSFRFLFF.

The protein localises to the membrane. This is an uncharacterized protein from Saccharomyces cerevisiae (strain ATCC 204508 / S288c) (Baker's yeast).